A 236-amino-acid chain; its full sequence is Purine nucleoside phosphorylase DeoD-type (236 aa).

H5 contacts a purine D-ribonucleoside. Residues G21, R25, R44, and R88 to T91 contribute to the phosphate site. A purine D-ribonucleoside is bound by residues E180–E182 and S204–D205. The active-site Proton donor is D205.

The protein belongs to the PNP/UDP phosphorylase family. As to quaternary structure, homohexamer; trimer of homodimers.

It catalyses the reaction a purine D-ribonucleoside + phosphate = a purine nucleobase + alpha-D-ribose 1-phosphate. The catalysed reaction is a purine 2'-deoxy-D-ribonucleoside + phosphate = a purine nucleobase + 2-deoxy-alpha-D-ribose 1-phosphate. In terms of biological role, catalyzes the reversible phosphorolytic breakdown of the N-glycosidic bond in the beta-(deoxy)ribonucleoside molecules, with the formation of the corresponding free purine bases and pentose-1-phosphate. The polypeptide is Purine nucleoside phosphorylase DeoD-type (Shewanella amazonensis (strain ATCC BAA-1098 / SB2B)).